The primary structure comprises 397 residues: Tryptophan synthase beta chain (397 aa).

The residue at position 91 (Lys-91) is an N6-(pyridoxal phosphate)lysine.

The protein belongs to the TrpB family. Tetramer of two alpha and two beta chains. Pyridoxal 5'-phosphate serves as cofactor.

The catalysed reaction is (1S,2R)-1-C-(indol-3-yl)glycerol 3-phosphate + L-serine = D-glyceraldehyde 3-phosphate + L-tryptophan + H2O. It participates in amino-acid biosynthesis; L-tryptophan biosynthesis; L-tryptophan from chorismate: step 5/5. In terms of biological role, the beta subunit is responsible for the synthesis of L-tryptophan from indole and L-serine. The chain is Tryptophan synthase beta chain from Bacillus thuringiensis (strain Al Hakam).